Consider the following 475-residue polypeptide: Ribulose bisphosphate carboxylase large chain (475 aa).

Positions 1-2 (MA) are excised as a propeptide. N-acetylproline is present on Pro3. N6,N6,N6-trimethyllysine is present on Lys14. Substrate contacts are provided by Asn123 and Thr173. Lys175 serves as the catalytic Proton acceptor. Lys177 lines the substrate pocket. Residues Lys201, Asp203, and Glu204 each coordinate Mg(2+). Lys201 is subject to N6-carboxylysine. His294 (proton acceptor) is an active-site residue. Substrate contacts are provided by Arg295, His327, and Ser379.

It belongs to the RuBisCO large chain family. Type I subfamily. As to quaternary structure, heterohexadecamer of 8 large chains and 8 small chains. The cofactor is Mg(2+).

It is found in the plastid. Its subcellular location is the chloroplast. It carries out the reaction 2 (2R)-3-phosphoglycerate + 2 H(+) = D-ribulose 1,5-bisphosphate + CO2 + H2O. The catalysed reaction is D-ribulose 1,5-bisphosphate + O2 = 2-phosphoglycolate + (2R)-3-phosphoglycerate + 2 H(+). Functionally, ruBisCO catalyzes two reactions: the carboxylation of D-ribulose 1,5-bisphosphate, the primary event in carbon dioxide fixation, as well as the oxidative fragmentation of the pentose substrate in the photorespiration process. Both reactions occur simultaneously and in competition at the same active site. The chain is Ribulose bisphosphate carboxylase large chain from Nephroselmis olivacea (Green alga).